Consider the following 276-residue polypeptide: Large ribosomal subunit protein uL2 (276 aa).

2 disordered regions span residues 14–58 and 219–276; these read RNAS…GGGH and PITR…KNRK. The segment covering 16–27 has biased composition (polar residues); that stretch reads ASVSDFSELTRS. Positions 255 to 276 are enriched in basic residues; it reads RRPKKASNKMIVRRRPSGKNRK.

It belongs to the universal ribosomal protein uL2 family. Part of the 50S ribosomal subunit. Forms a bridge to the 30S subunit in the 70S ribosome.

One of the primary rRNA binding proteins. Required for association of the 30S and 50S subunits to form the 70S ribosome, for tRNA binding and peptide bond formation. It has been suggested to have peptidyltransferase activity; this is somewhat controversial. Makes several contacts with the 16S rRNA in the 70S ribosome. This Bifidobacterium longum (strain DJO10A) protein is Large ribosomal subunit protein uL2.